The primary structure comprises 356 residues: Serine/arginine-rich splicing factor RS41 (356 aa).

2 RRM domains span residues 2 to 74 (KPVF…WTKN) and 96 to 167 (KTLF…YAVK). Positions 73–92 (KNDRGGAGRSGGSRRSSSGL) are disordered. The span at 168–186 (DDDSRGNGYSPERRRDRSP) shows a compositional bias: basic and acidic residues. The tract at residues 168–356 (DDDSRGNGYS…SPSRSPPAEE (189 aa)) is disordered. Serine 192, serine 194, serine 210, serine 239, serine 254, and serine 274 each carry phosphoserine. The segment covering 238–253 (LSPDYKRDDRRRERVA) has biased composition (basic and acidic residues). 3 consecutive repeat copies span residues 267–278 (KGRGESRSPPPY), 279–290 (EKRRESRSPPPY), and 291–302 (EKRRESRSPPPY). The interval 267-307 (KGRGESRSPPPYEKRRESRSPPPYEKRRESRSPPPYEKRRE) is 4 X 12 AA tandem repeats of [KE]-[GK]-R -[GR]-E-S-R-S-P-P-P-Y. Residues 268 to 306 (GRGESRSPPPYEKRRESRSPPPYEKRRESRSPPPYEKRR) show a composition bias toward basic and acidic residues. The 4; truncated repeat unit spans residues 303-307 (EKRRE). Serine 309, serine 324, serine 342, serine 347, and serine 351 each carry phosphoserine.

The protein belongs to the splicing factor SR family. RS subfamily. In terms of assembly, component of the spliceosome. Interacts with RCF3 and CPL1. Interacts with DRB1/HYL1 and SE. In terms of tissue distribution, leaves, stem, roots and flowers.

The protein resides in the nucleus. It localises to the nucleus speckle. Its function is as follows. Required for constitutive and alternative pre-mRNA splicing. Involved in primary miRNA processing and pri-miRNA biogenesis. Binds both intronless and intron-containing pri-miRNAs. In Arabidopsis thaliana (Mouse-ear cress), this protein is Serine/arginine-rich splicing factor RS41 (RS41).